The primary structure comprises 189 residues: Elongation factor P (189 aa).

The residue at position 34 (Lys34) is an N6-(3,6-diaminohexanoyl)-5-hydroxylysine.

Belongs to the elongation factor P family. May be beta-lysylated on the epsilon-amino group of Lys-34 by the combined action of EpmA and EpmB, and then hydroxylated on the C5 position of the same residue by EpmC (if this protein is present). Lysylation is critical for the stimulatory effect of EF-P on peptide-bond formation. The lysylation moiety may extend toward the peptidyltransferase center and stabilize the terminal 3-CCA end of the tRNA. Hydroxylation of the C5 position on Lys-34 may allow additional potential stabilizing hydrogen-bond interactions with the P-tRNA.

The protein resides in the cytoplasm. Its pathway is protein biosynthesis; polypeptide chain elongation. Involved in peptide bond synthesis. Alleviates ribosome stalling that occurs when 3 or more consecutive Pro residues or the sequence PPG is present in a protein, possibly by augmenting the peptidyl transferase activity of the ribosome. Modification of Lys-34 is required for alleviation. The polypeptide is Elongation factor P (Legionella pneumophila (strain Paris)).